Consider the following 76-residue polypeptide: Exodeoxyribonuclease 7 small subunit (76 aa).

The protein belongs to the XseB family. As to quaternary structure, heterooligomer composed of large and small subunits.

Its subcellular location is the cytoplasm. The enzyme catalyses Exonucleolytic cleavage in either 5'- to 3'- or 3'- to 5'-direction to yield nucleoside 5'-phosphates.. In terms of biological role, bidirectionally degrades single-stranded DNA into large acid-insoluble oligonucleotides, which are then degraded further into small acid-soluble oligonucleotides. The chain is Exodeoxyribonuclease 7 small subunit from Geobacter sulfurreducens (strain ATCC 51573 / DSM 12127 / PCA).